The primary structure comprises 298 residues: Myozenin-1 (298 aa).

The interval methionine 1–leucine 34 is disordered. A Phosphoserine modification is found at serine 82. Residues phenylalanine 105–glutamate 173 form a disordered region. Low complexity predominate over residues glycine 118–glutamine 129. A compositionally biased stretch (gly residues) spans serine 136–glycine 172.

It belongs to the myozenin family. Interacts with ACTN2, ACTN3, FLNA, FLNB, FLNC, LDB3, PPP3CA and TCAP. Interacts via its C-terminal region with MYOT.

It localises to the nucleus. Its subcellular location is the cell projection. The protein localises to the pseudopodium. Its function is as follows. Myozenins may serve as intracellular binding proteins involved in linking Z-disk proteins such as alpha-actinin, gamma-filamin, TCAP/telethonin, LDB3/ZASP and localizing calcineurin signaling to the sarcomere. Plays an important role in the modulation of calcineurin signaling. May play a role in myofibrillogenesis. The chain is Myozenin-1 (MYOZ1) from Sus scrofa (Pig).